Consider the following 206-residue polypeptide: Large ribosomal subunit protein uL4 (206 aa).

The interval 44–87 is disordered; sequence KRQGTQKAKTRSEVRGGGRKPWRQKGTGHARQGSTRSPQWTGGG. A compositionally biased stretch (basic residues) spans 60–71; sequence GGRKPWRQKGTG.

This sequence belongs to the universal ribosomal protein uL4 family. As to quaternary structure, part of the 50S ribosomal subunit.

Its function is as follows. One of the primary rRNA binding proteins, this protein initially binds near the 5'-end of the 23S rRNA. It is important during the early stages of 50S assembly. It makes multiple contacts with different domains of the 23S rRNA in the assembled 50S subunit and ribosome. Functionally, forms part of the polypeptide exit tunnel. The sequence is that of Large ribosomal subunit protein uL4 from Agathobacter rectalis (strain ATCC 33656 / DSM 3377 / JCM 17463 / KCTC 5835 / VPI 0990) (Eubacterium rectale).